The primary structure comprises 1555 residues: Probable serine/threonine-protein kinase DDB_G0276181 (1555 aa).

Disordered stretches follow at residues 1 to 54 (MTSV…NNSF), 138 to 208 (IIQQ…NSKL), 342 to 452 (KLKK…DSPF), 486 to 508 (TTTT…IKPL), and 781 to 850 (NNIN…NQNT). 4 stretches are compositionally biased toward low complexity: residues 14 to 53 (NNSG…NNNS), 138 to 205 (IIQQ…NNNN), 359 to 378 (SNIA…KING), and 395 to 431 (NNSQ…SKKP). The PH domain maps to 58 to 238 (QVLHTGYLTK…WIEMIKLAIS (181 aa)). Polar residues predominate over residues 437–452 (RNISTSDNGSGTDSPF). 2 stretches are compositionally biased toward low complexity: residues 486–504 (TTTT…TNTN) and 781–832 (NNIN…NNNN). A compositionally biased stretch (polar residues) spans 833–850 (GSGLLSSSPLITISNQNT). Residues 986 to 1309 (VVLHERLGTG…TIIHSISKMI (324 aa)) enclose the Protein kinase domain. Residue 992–1000 (LGTGATGDI) participates in ATP binding. The tract at residues 1012–1031 (RHISNQDSSGSNSSGSGSGH) is disordered. Residue Lys-1061 coordinates ATP. Asp-1156 acts as the Proton acceptor in catalysis. Residues 1340 to 1376 (VQNNNNNSNNNNNNNNNNNNNNSNSNLNNCNNSSPNL) show a composition bias toward low complexity. Disordered stretches follow at residues 1340 to 1383 (VQNN…SANN) and 1457 to 1480 (KKSS…GSSR).

This sequence belongs to the protein kinase superfamily. TKL Ser/Thr protein kinase family.

It carries out the reaction L-seryl-[protein] + ATP = O-phospho-L-seryl-[protein] + ADP + H(+). It catalyses the reaction L-threonyl-[protein] + ATP = O-phospho-L-threonyl-[protein] + ADP + H(+). This Dictyostelium discoideum (Social amoeba) protein is Probable serine/threonine-protein kinase DDB_G0276181.